Reading from the N-terminus, the 443-residue chain is Trigger factor (443 aa).

Residues 169-254 (GDIAFLDFSG…LNSIKEVQLP (86 aa)) enclose the PPIase FKBP-type domain.

The protein belongs to the FKBP-type PPIase family. Tig subfamily.

The protein resides in the cytoplasm. The enzyme catalyses [protein]-peptidylproline (omega=180) = [protein]-peptidylproline (omega=0). Its function is as follows. Involved in protein export. Acts as a chaperone by maintaining the newly synthesized protein in an open conformation. Functions as a peptidyl-prolyl cis-trans isomerase. The protein is Trigger factor of Mycoplasmoides gallisepticum (strain R(low / passage 15 / clone 2)) (Mycoplasma gallisepticum).